The following is a 474-amino-acid chain: 3-isopropylmalate dehydratase large subunit (474 aa).

3 residues coordinate [4Fe-4S] cluster: Cys355, Cys415, and Cys418.

This sequence belongs to the aconitase/IPM isomerase family. LeuC type 1 subfamily. Heterodimer of LeuC and LeuD. It depends on [4Fe-4S] cluster as a cofactor.

The enzyme catalyses (2R,3S)-3-isopropylmalate = (2S)-2-isopropylmalate. It functions in the pathway amino-acid biosynthesis; L-leucine biosynthesis; L-leucine from 3-methyl-2-oxobutanoate: step 2/4. Catalyzes the isomerization between 2-isopropylmalate and 3-isopropylmalate, via the formation of 2-isopropylmaleate. The chain is 3-isopropylmalate dehydratase large subunit from Shewanella sp. (strain ANA-3).